Consider the following 223-residue polypeptide: Phosphoribosylformylglycinamidine synthase subunit PurQ (223 aa).

The region spanning 2–223 (KVAIIRFPGT…LLENFINFNF (222 aa)) is the Glutamine amidotransferase type-1 domain. The Nucleophile role is filled by C84. Active-site residues include H192 and E194.

As to quaternary structure, part of the FGAM synthase complex composed of 1 PurL, 1 PurQ and 2 PurS subunits.

It localises to the cytoplasm. The enzyme catalyses N(2)-formyl-N(1)-(5-phospho-beta-D-ribosyl)glycinamide + L-glutamine + ATP + H2O = 2-formamido-N(1)-(5-O-phospho-beta-D-ribosyl)acetamidine + L-glutamate + ADP + phosphate + H(+). It catalyses the reaction L-glutamine + H2O = L-glutamate + NH4(+). The protein operates within purine metabolism; IMP biosynthesis via de novo pathway; 5-amino-1-(5-phospho-D-ribosyl)imidazole from N(2)-formyl-N(1)-(5-phospho-D-ribosyl)glycinamide: step 1/2. Functionally, part of the phosphoribosylformylglycinamidine synthase complex involved in the purines biosynthetic pathway. Catalyzes the ATP-dependent conversion of formylglycinamide ribonucleotide (FGAR) and glutamine to yield formylglycinamidine ribonucleotide (FGAM) and glutamate. The FGAM synthase complex is composed of three subunits. PurQ produces an ammonia molecule by converting glutamine to glutamate. PurL transfers the ammonia molecule to FGAR to form FGAM in an ATP-dependent manner. PurS interacts with PurQ and PurL and is thought to assist in the transfer of the ammonia molecule from PurQ to PurL. This Campylobacter jejuni subsp. jejuni serotype O:2 (strain ATCC 700819 / NCTC 11168) protein is Phosphoribosylformylglycinamidine synthase subunit PurQ.